Reading from the N-terminus, the 235-residue chain is Small ribosomal subunit protein uS3 (235 aa).

Residues 39-107 (IREFIKEECK…ELHLNIVEVR (69 aa)) enclose the KH type-2 domain. Positions 213-235 (QARDRKAQELQDGPAPRGAGGRR) are disordered.

It belongs to the universal ribosomal protein uS3 family. In terms of assembly, part of the 30S ribosomal subunit. Forms a tight complex with proteins S10 and S14.

Its function is as follows. Binds the lower part of the 30S subunit head. Binds mRNA in the 70S ribosome, positioning it for translation. This is Small ribosomal subunit protein uS3 from Ruegeria pomeroyi (strain ATCC 700808 / DSM 15171 / DSS-3) (Silicibacter pomeroyi).